The chain runs to 399 residues: Sex hormone-binding globulin (399 aa).

A signal peptide spans 1–29 (MENRDSVASLLLLLLLLPPPHTHQGQVLR). Laminin G-like domains lie at 43–214 (RYLS…LGNC) and 221–387 (GLFF…THSC). Asn-160 carries N-linked (GlcNAc...) asparagine glycosylation. An intrachain disulfide couples Cys-191 to Cys-214. N-linked (GlcNAc...) asparagine glycans are attached at residues Asn-270, Asn-353, Asn-377, and Asn-393. A disulfide bridge connects residues Cys-359 and Cys-387.

Homodimer. Post-translationally, differentially glycosylated in liver (SHBG) and testis (ABP).

The protein resides in the secreted. In terms of biological role, functions as an androgen transport protein, but may also be involved in receptor mediated processes. Each dimer binds one molecule of steroid. Specific for 5-alpha-dihydrotestosterone, testosterone, and 17-beta-estradiol. Regulates the plasma metabolic clearance rate of steroid hormones by controlling their plasma concentration. In Phodopus sungorus (Striped hairy-footed hamster), this protein is Sex hormone-binding globulin (SHBG).